The sequence spans 740 residues: Ribulose bisphosphate carboxylase, chloroplastic (740 aa).

Residues 1–55 (MPSSSFTTGLALGAGALVGANAFVAPTAKTTNLRAPTQEASLQVAASQQTEQPAP) constitute a chloroplast transit peptide. Residues 56 to 76 (STSALPWAFGAGACLALAAGG) traverse the membrane as a helical segment. Asn-213 provides a ligand contact to substrate. The active-site Proton acceptor is the Lys-268. A substrate-binding site is contributed by Lys-270. 3 residues coordinate Mg(2+): Lys-293, Asp-295, and Glu-296. An N6-carboxylysine modification is found at Lys-293. His-389 acts as the Proton acceptor in catalysis. The substrate site is built by Arg-390, His-423, and Ser-470.

It belongs to the RuBisCO large chain family. Type II subfamily. In terms of assembly, homodimer. The cofactor is Mg(2+).

The protein resides in the plastid. It is found in the chloroplast membrane. It carries out the reaction 2 (2R)-3-phosphoglycerate + 2 H(+) = D-ribulose 1,5-bisphosphate + CO2 + H2O. The catalysed reaction is D-ribulose 1,5-bisphosphate + O2 = 2-phosphoglycolate + (2R)-3-phosphoglycerate + 2 H(+). Functionally, ruBisCO catalyzes two reactions: the carboxylation of D-ribulose 1,5-bisphosphate, the primary event in carbon dioxide fixation, as well as the oxidative fragmentation of the pentose substrate. Both reactions occur simultaneously and in competition at the same active site. The sequence is that of Ribulose bisphosphate carboxylase, chloroplastic (rbcL) from Heterocapsa triquetra (Dinoflagellate).